Consider the following 91-residue polypeptide: Small ribosomal subunit protein uS15 (91 aa).

Belongs to the universal ribosomal protein uS15 family. As to quaternary structure, part of the 30S ribosomal subunit. Forms a bridge to the 50S subunit in the 70S ribosome, contacting the 23S rRNA.

Its function is as follows. One of the primary rRNA binding proteins, it binds directly to 16S rRNA where it helps nucleate assembly of the platform of the 30S subunit by binding and bridging several RNA helices of the 16S rRNA. Functionally, forms an intersubunit bridge (bridge B4) with the 23S rRNA of the 50S subunit in the ribosome. In Rickettsia akari (strain Hartford), this protein is Small ribosomal subunit protein uS15.